Reading from the N-terminus, the 311-residue chain is DNA replication terminus site-binding protein (311 aa).

It belongs to the Tus family.

The protein resides in the cytoplasm. Its function is as follows. Trans-acting protein required for termination of DNA replication. Binds to DNA replication terminator sequences (terA to terF) to prevent the passage of replication forks. The termination efficiency will be affected by the affinity of this protein for the terminator sequence. This Yersinia pseudotuberculosis serotype I (strain IP32953) protein is DNA replication terminus site-binding protein.